Reading from the N-terminus, the 824-residue chain is Kinesin-like protein KIFC3 (824 aa).

Positions 27–79 are disordered; that stretch reads EPKPGMARPAPASPAARPFPHTGQGRLRTGRGKDILPSGEEDSTSRTAARPSL. A compositionally biased stretch (low complexity) spans 33–46; sequence ARPAPASPAARPFP. Coiled-coil stretches lie at residues 100–360 and 393–430; these read LTVQ…ENLA and LLQEALRSVKAEIGQAIEEVNSNNQELLRKYRRELQLR. The Kinesin motor domain maps to 443–766; the sequence is NIRVIARVRP…LRFAERVRSV (324 aa). ATP is bound at residue 526-533; sequence GQTGAGKT. The interval 771–824 is disordered; it reads GSRRTELGSWSSQEHLEWEPACQTPQPTARAHSAPGSGTSSRPGSIRRKLQPSA. 2 positions are modified to phosphoserine: serine 811 and serine 815. Basic residues predominate over residues 815–824; sequence SIRRKLQPSA.

This sequence belongs to the TRAFAC class myosin-kinesin ATPase superfamily. Kinesin family. Interacts with annexin XIIIB. In terms of tissue distribution, predominant expression in the kidney, testis and ovary. Also expressed in brain, heart, liver, lung and uterus.

It localises to the cytoplasm. The protein localises to the cytoskeleton. It is found in the cytoplasmic vesicle membrane. The protein resides in the cell junction. Its subcellular location is the adherens junction. It localises to the microtubule organizing center. The protein localises to the centrosome. Minus-end microtubule-dependent motor protein. Involved in apically targeted transport. Required for zonula adherens maintenance. The polypeptide is Kinesin-like protein KIFC3 (Kifc3) (Mus musculus (Mouse)).